The following is a 1274-amino-acid chain: Protein ECM30 (1274 aa).

Disordered stretches follow at residues 23 to 42, 405 to 439, and 494 to 517; these read EDADASSPSRTSSPSPSLSV, RRAVSTSSHDNSSSSHASLPSSSSAAYHTKPQTKP, and SSSSSTTRSNSSTTSNGTSNDTSN. Composition is skewed to low complexity over residues 27–42, 409–432, and 494–515; these read ASSPSRTSSPSPSLSV, STSSHDNSSSSHASLPSSSSAAYH, and SSSSSTTRSNSSTTSNGTSNDT. At Ser635 the chain carries Phosphoserine. The segment covering 803 to 822 has biased composition (low complexity); the sequence is NQQHQNQQQGQNDNRGQNQN. The disordered stretch occupies residues 803–842; it reads NQQHQNQQQGQNDNRGQNQNEDPGQENESPTPYLLFNPAS. At Ser1065 the chain carries Phosphoserine. Residues 1100 to 1149 form a disordered region; that stretch reads HLRSSSSSSSITLEKTTSNSSSIRTRPNSHHVAPETNNNNSTNGNSNNSS. Residues 1110–1125 show a composition bias toward polar residues; the sequence is ITLEKTTSNSSSIRTR. Low complexity predominate over residues 1135-1149; sequence TNNNNSTNGNSNNSS.

The protein resides in the cytoplasm. Seems to be involved in cell wall organization and biogenesis. In Saccharomyces cerevisiae (strain ATCC 204508 / S288c) (Baker's yeast), this protein is Protein ECM30 (ECM30).